The following is a 256-amino-acid chain: Enolase-phosphatase E1 (256 aa).

2 residues coordinate Mg(2+): Asp-14 and Glu-16. Substrate-binding positions include 142–143 (SS) and Lys-176. Asp-201 contributes to the Mg(2+) binding site.

It belongs to the HAD-like hydrolase superfamily. MasA/MtnC family. In terms of assembly, monomer. Requires Mg(2+) as cofactor.

It is found in the cytoplasm. The protein resides in the nucleus. The catalysed reaction is 5-methylsulfanyl-2,3-dioxopentyl phosphate + H2O = 1,2-dihydroxy-5-(methylsulfanyl)pent-1-en-3-one + phosphate. It participates in amino-acid biosynthesis; L-methionine biosynthesis via salvage pathway; L-methionine from S-methyl-5-thio-alpha-D-ribose 1-phosphate: step 3/6. The protein operates within amino-acid biosynthesis; L-methionine biosynthesis via salvage pathway; L-methionine from S-methyl-5-thio-alpha-D-ribose 1-phosphate: step 4/6. In terms of biological role, bifunctional enzyme that catalyzes the enolization of 2,3-diketo-5-methylthiopentyl-1-phosphate (DK-MTP-1-P) into the intermediate 2-hydroxy-3-keto-5-methylthiopentenyl-1-phosphate (HK-MTPenyl-1-P), which is then dephosphorylated to form the acireductone 1,2-dihydroxy-3-keto-5-methylthiopentene (DHK-MTPene). The polypeptide is Enolase-phosphatase E1 (Drosophila erecta (Fruit fly)).